A 445-amino-acid polypeptide reads, in one-letter code: Argininosuccinate synthase (445 aa).

Residues 18-26 (AFSGGLDTS) and Ala44 contribute to the ATP site. Position 100 (Tyr100) interacts with L-citrulline. 2 residues coordinate ATP: Gly130 and Thr132. L-aspartate contacts are provided by Thr132, Asn136, and Asp137. An L-citrulline-binding site is contributed by Asn136. Asp137 is an ATP binding site. L-citrulline contacts are provided by Arg140 and Ser193. Residue Asp195 coordinates ATP. Residues Thr202, Glu204, and Glu281 each contribute to the L-citrulline site.

It belongs to the argininosuccinate synthase family. Type 2 subfamily. As to quaternary structure, homotetramer.

Its subcellular location is the cytoplasm. It carries out the reaction L-citrulline + L-aspartate + ATP = 2-(N(omega)-L-arginino)succinate + AMP + diphosphate + H(+). The protein operates within amino-acid biosynthesis; L-arginine biosynthesis; L-arginine from L-ornithine and carbamoyl phosphate: step 2/3. This is Argininosuccinate synthase (argG) from Pasteurella multocida (strain Pm70).